We begin with the raw amino-acid sequence, 266 residues long: Apolipoprotein A-I (266 aa).

Positions 1 to 18 (MKAVVLTLAVLFLTGSQA) are cleaved as a signal peptide. 2 consecutive repeat copies span residues 67–88 (LKLL…EQIG) and 89–110 (PVTQ…QEMN). Positions 67–266 (LKLLDNWDSL…DEATKKLNAQ (200 aa)) are 10 X approximate tandem repeats. Met109 is subject to Methionine sulfoxide. One copy of the 3; half-length repeat lies at 111 to 121 (KDLEEVKKKVQ). 5 tandem repeats follow at residues 122 to 143 (PYLD…QKVA), 144 to 165 (PLGA…EKLS), 166 to 187 (PLGE…AQLA), 188 to 209 (PYSE…EGGG), and 210 to 231 (ATLT…EKAK). The 9; half-length repeat unit spans residues 232-242 (PALEDLRQGLM). Residues 243–266 (PVLESFRASLLAAVDEATKKLNAQ) form repeat 10.

It belongs to the apolipoprotein A1/A4/E family. Homodimer. Interacts with APOA1BP and CLU. Component of a sperm activating protein complex (SPAP), consisting of APOA1, an immunoglobulin heavy chain, an immunoglobulin light chain and albumin. Interacts with NDRG1. Interacts with SCGB3A2. Interacts with NAXE and YJEFN3. Post-translationally, glycosylated. In terms of processing, palmitoylated. Phosphorylation sites are present in the extracellular medium.

It is found in the secreted. Participates in the reverse transport of cholesterol from tissues to the liver for excretion by promoting cholesterol efflux from tissues and by acting as a cofactor for the lecithin cholesterol acyltransferase (LCAT). As part of the SPAP complex, activates spermatozoa motility. The protein is Apolipoprotein A-I (APOA1) of Phoca vitulina (Harbor seal).